A 707-amino-acid chain; its full sequence is E3 ubiquitin-protein ligase Praja-2 (707 aa).

A compositionally biased stretch (basic and acidic residues) spans 1 to 10 (MSQYTEKEPS). Disordered regions lie at residues 1-23 (MSQY…AWPR), 75-120 (NTAG…PSVA), and 242-290 (AGDA…CVPG). An N-acetylserine modification is found at S2. A compositionally biased stretch (polar residues) spans 109–119 (LNQSTESNPSV). The segment covering 246–276 (EAVHQDGQEFQRSSEDGIVRKRRQDDTDQGR) has biased composition (basic and acidic residues). 2 positions are modified to phosphoserine: S306 and S320. Residue S339 is modified to Phosphoserine; by PKA. Disordered regions lie at residues 380 to 403 (VTPR…GRQE) and 424 to 493 (EDSS…QTSL). Basic and acidic residues predominate over residues 381–391 (TPREAERHRAT). S430 carries the post-translational modification Phosphoserine. Acidic residues predominate over residues 465–481 (NEPELQSDSSGPEEENQ). Residues 482–491 (ELSLQEGEQT) are compositionally biased toward polar residues. An interaction with PRKAR1A, PRKAR2A and PRKAR2B region spans residues 530-707 (DGNNNLEDDS…PANDNAEEAP (178 aa)). The tract at residues 549-569 (WSLFDGFADGLGVAEAISYVD) is mediates interaction with TBC1D31. The RING-type; atypical zinc-finger motif lies at 633-674 (CPICCSEYIKDDIATELPCHHFFHKPCVSIWLQKSGTCPVCR). Residues 686 to 707 (AAASSEPDLDASPANDNAEEAP) form a disordered region.

Binds ubiquitin-conjugating enzymes (E2s). In vitro, interacts with the ubiquitin-conjugating enzyme, UBE2D2. The phosphorylated form interacts with PRKAR1A, PRKAR2A and PRKAR2B. Binds the catalytic subunits of cAMP-dependent protein kinase. Interacts with MFHAS1. Interacts with TBC1D31; the interaction is direct and recruits PJA2 to centrosomes. In terms of tissue distribution, highly expressed in the brain, in nerve cells but not in glial cells. Abundantly expressed in pyramidal neurons and in the CA3 region of apical dendrites. Colocalizes with PRKAR2B in dentate granule cells and at postsynaptic sites of primary hippocampal neurons.

It is found in the cytoplasm. Its subcellular location is the cell membrane. The protein localises to the endoplasmic reticulum membrane. It localises to the golgi apparatus membrane. The protein resides in the synapse. It is found in the postsynaptic density. Its subcellular location is the cytoskeleton. The protein localises to the microtubule organizing center. It localises to the centrosome. It catalyses the reaction S-ubiquitinyl-[E2 ubiquitin-conjugating enzyme]-L-cysteine + [acceptor protein]-L-lysine = [E2 ubiquitin-conjugating enzyme]-L-cysteine + N(6)-ubiquitinyl-[acceptor protein]-L-lysine.. It functions in the pathway protein modification; protein ubiquitination. Has E2-dependent E3 ubiquitin-protein ligase activity. Responsible for ubiquitination of cAMP-dependent protein kinase type I and type II-alpha/beta regulatory subunits and for targeting them for proteasomal degradation. Essential for PKA-mediated long-term memory processes. Through the ubiquitination of MFHAS1, positively regulates the TLR2 signaling pathway that leads to the activation of the downstream p38 and JNK MAP kinases and promotes the polarization of macrophages toward the pro-inflammatory M1 phenotype. Plays a role in ciliogenesis by ubiquitinating OFD1. This chain is E3 ubiquitin-protein ligase Praja-2 (Pja2), found in Rattus norvegicus (Rat).